The primary structure comprises 240 residues: MKVKKGGGGTGPGAEPVPGASNRSVEPTREPGAEAESGSESEPEPGPGPRLGPLQGKQPIGPEDVLGLQRITGDYLCSPEENIYKIDFVRFKIRDMDSGTVLFEIKKPPVSERLPINRRDLDPNAGRFVRYQFTPAFLRLRQVGATVEFTVGDKPVNNFRMIERHYFRNQLLKSFDFHFGFCIPSSKNTCEHIYDFPPLSEELISEMIRHPYETQSDSFYFVDDRLVMHNKADYSYSGTP.

Positions Met-1–Pro-12 are enriched in gly residues. Positions Met-1 to Pro-62 are disordered. Phosphoserine; by CK2 is present on residues Ser-37, Ser-39, and Ser-41. Tyr-131 provides a ligand contact to tetradecanoate.

Belongs to the PDE6D/unc-119 family. As to quaternary structure, interacts with CABP4; in the absence of calcium. May interact with GTP-bound ARL1. Interacts with ARL2 and ARL3 (GTP-bound forms); this promotes the release of myristoylated cargo proteins. Found in a complex with ARL3, RP2 and UNC119; RP2 induces hydrolysis of GTP ARL3 in the complex, leading to the release of UNC119. Interacts with NPHP3 (when myristoylated). Interacts with CYS1 (when myristoylated). Interacts with MACIR; interaction only takes place when UNC119 is not liganded with myristoylated proteins. Interacts with ARL1 and ARL3 GTP-bound forms. Interacts with ARL2. Interacts with ARL2. Interacts with LCK; this interaction plays a crucial role in activation of LCK. Interacts with FYN. Interacts with RAB11A; in a cell cycle-dependent manner. Interacts with LYN (via SH2 and SH3 domains); leading to LYN activation. Interacts with DNM1; leading to a decrease of DNM1 GTPase activity. Found in a complex with ABL1, ABL2, CRK and UNC119; leading to the inhibition of CRK phosphorylation by ABL kinases. Interacts with CD44. Interacts with KLHL18 (via kelch repeats). Interacts with PPP3CA, PPP3CB and PPP3CC. Interacts with USP48; this interaction promotes UNC119 stability. Post-translationally, phosphorylation suppresses its interaction with KLHL18 and down-regulates its KLHL18-mediated degradation. Phosphorylated more under light conditions than dark conditions. Dephosphorylated by calcineurin.

The protein localises to the cytoplasm. The protein resides in the cytoskeleton. Its subcellular location is the microtubule organizing center. It localises to the centrosome. It is found in the spindle. The protein localises to the spindle pole. Involved in synaptic functions in photoreceptor cells, the signal transduction in immune cells as a Src family kinase activator, endosome recycling, the uptake of bacteria and endocytosis, protein trafficking in sensory neurons and as lipid-binding chaperone with specificity for a diverse subset of myristoylated proteins. Specifically binds the myristoyl moiety of a subset of N-terminally myristoylated proteins and is required for their localization. Binds myristoylated GNAT1 and is required for G-protein localization and trafficking in sensory neurons. Probably plays a role in trafficking proteins in photoreceptor cells. Plays important roles in mediating Src family kinase signals for the completion of cytokinesis via RAB11A. The polypeptide is Protein unc-119 homolog A (Unc119) (Rattus norvegicus (Rat)).